Reading from the N-terminus, the 407-residue chain is S-adenosylmethionine synthase (407 aa).

ATP is bound at residue G140 to D145.

This sequence belongs to the AdoMet synthase 2 family. Requires Mg(2+) as cofactor.

It carries out the reaction L-methionine + ATP + H2O = S-adenosyl-L-methionine + phosphate + diphosphate. It participates in amino-acid biosynthesis; S-adenosyl-L-methionine biosynthesis; S-adenosyl-L-methionine from L-methionine: step 1/1. Its function is as follows. Catalyzes the formation of S-adenosylmethionine from methionine and ATP. In Methanosphaera stadtmanae (strain ATCC 43021 / DSM 3091 / JCM 11832 / MCB-3), this protein is S-adenosylmethionine synthase.